The chain runs to 295 residues: 4-hydroxy-tetrahydrodipicolinate synthase (295 aa).

Residue threonine 48 coordinates pyruvate. Tyrosine 135 acts as the Proton donor/acceptor in catalysis. Catalysis depends on lysine 163, which acts as the Schiff-base intermediate with substrate. Valine 204 contacts pyruvate.

Belongs to the DapA family. In terms of assembly, homotetramer; dimer of dimers.

The protein localises to the cytoplasm. It catalyses the reaction L-aspartate 4-semialdehyde + pyruvate = (2S,4S)-4-hydroxy-2,3,4,5-tetrahydrodipicolinate + H2O + H(+). It functions in the pathway amino-acid biosynthesis; L-lysine biosynthesis via DAP pathway; (S)-tetrahydrodipicolinate from L-aspartate: step 3/4. Catalyzes the condensation of (S)-aspartate-beta-semialdehyde [(S)-ASA] and pyruvate to 4-hydroxy-tetrahydrodipicolinate (HTPA). The protein is 4-hydroxy-tetrahydrodipicolinate synthase of Francisella tularensis subsp. novicida (strain U112).